Reading from the N-terminus, the 352-residue chain is Uroporphyrinogen decarboxylase (352 aa).

Substrate is bound by residues 27 to 31 (RQAGR), Asp-77, Tyr-154, Thr-209, and His-325.

Belongs to the uroporphyrinogen decarboxylase family. Homodimer.

It is found in the cytoplasm. It catalyses the reaction uroporphyrinogen III + 4 H(+) = coproporphyrinogen III + 4 CO2. The protein operates within porphyrin-containing compound metabolism; protoporphyrin-IX biosynthesis; coproporphyrinogen-III from 5-aminolevulinate: step 4/4. Catalyzes the decarboxylation of four acetate groups of uroporphyrinogen-III to yield coproporphyrinogen-III. This chain is Uroporphyrinogen decarboxylase, found in Legionella pneumophila (strain Lens).